We begin with the raw amino-acid sequence, 162 residues long: Large ribosomal subunit protein uL10 (162 aa).

This sequence belongs to the universal ribosomal protein uL10 family. Part of the ribosomal stalk of the 50S ribosomal subunit. The N-terminus interacts with L11 and the large rRNA to form the base of the stalk. The C-terminus forms an elongated spine to which L12 dimers bind in a sequential fashion forming a multimeric L10(L12)X complex.

Functionally, forms part of the ribosomal stalk, playing a central role in the interaction of the ribosome with GTP-bound translation factors. This chain is Large ribosomal subunit protein uL10, found in Vibrio cholerae serotype O1 (strain ATCC 39541 / Classical Ogawa 395 / O395).